Consider the following 587-residue polypeptide: 5-aminolevulinate synthase, erythroid-specific, mitochondrial (587 aa).

The transit peptide at 1-49 directs the protein to the mitochondrion; the sequence is MVAAAMLLRSCPVLSQGPTGLLGKVAKTYQFLFSIGRCPILATQGPTCS. Arginine 163 lines the succinyl-CoA pocket. Pyridoxal 5'-phosphate-binding residues include cysteine 258 and phenylalanine 259. The succinyl-CoA site is built by serine 280 and lysine 299. 3 residues coordinate pyridoxal 5'-phosphate: serine 332, histidine 360, and threonine 388. Lysine 391 is a catalytic residue. An N6-(pyridoxal phosphate)lysine modification is found at lysine 391. 2 residues coordinate pyridoxal 5'-phosphate: threonine 420 and threonine 421. Threonine 508 contacts succinyl-CoA.

Belongs to the class-II pyridoxal-phosphate-dependent aminotransferase family. In terms of assembly, homodimer. Interacts with SUCLA2. The cofactor is pyridoxal 5'-phosphate. As to expression, predomnantly expressed in erythroid cells.

It localises to the mitochondrion inner membrane. It is found in the mitochondrion. The catalysed reaction is succinyl-CoA + glycine + H(+) = 5-aminolevulinate + CO2 + CoA. It functions in the pathway porphyrin-containing compound metabolism; protoporphyrin-IX biosynthesis; 5-aminolevulinate from glycine: step 1/1. Functionally, catalyzes the pyridoxal 5'-phosphate (PLP)-dependent condensation of succinyl-CoA and glycine to form aminolevulinic acid (ALA), with CoA and CO2 as by-products. Contributes significantly to heme formation during erythropoiesis. This is 5-aminolevulinate synthase, erythroid-specific, mitochondrial (Alas2) from Mus musculus (Mouse).